We begin with the raw amino-acid sequence, 92 residues long: Small ribosomal subunit protein uS19 (92 aa).

This sequence belongs to the universal ribosomal protein uS19 family.

In terms of biological role, protein S19 forms a complex with S13 that binds strongly to the 16S ribosomal RNA. In Prochlorococcus marinus (strain MIT 9215), this protein is Small ribosomal subunit protein uS19.